The primary structure comprises 577 residues: 5'-AMP-activated protein kinase subunit gamma (577 aa).

Residues glutamine 45–asparagine 226 form a disordered region. Positions asparagine 58–asparagine 88 are enriched in low complexity. Polar residues-rich tracts occupy residues serine 106–glycine 121 and glutamate 138–methionine 155. The span at serine 165–asparagine 226 shows a compositional bias: low complexity. 4 CBS domains span residues valine 279 to lysine 341, glutamate 364 to glutamate 426, isoleucine 438 to serine 499, and glutamine 517 to serine 574.

Belongs to the 5'-AMP-activated protein kinase gamma subunit family.

Its function is as follows. AMPK may be responsible for the regulation of fatty acid synthesis by phosphorylation of acetyl-CoA carboxylase. The polypeptide is 5'-AMP-activated protein kinase subunit gamma (prkag) (Dictyostelium discoideum (Social amoeba)).